A 233-amino-acid chain; its full sequence is Large ribosomal subunit protein uL1 (233 aa).

It belongs to the universal ribosomal protein uL1 family. Part of the 50S ribosomal subunit.

Binds directly to 23S rRNA. The L1 stalk is quite mobile in the ribosome, and is involved in E site tRNA release. In terms of biological role, protein L1 is also a translational repressor protein, it controls the translation of the L11 operon by binding to its mRNA. The protein is Large ribosomal subunit protein uL1 of Deinococcus deserti (strain DSM 17065 / CIP 109153 / LMG 22923 / VCD115).